Reading from the N-terminus, the 174-residue chain is MAIREILTVPDPILKEVSQPVDQVDDDLRELMDDMLQTMYAADGIGLAAIQVGVPKRVIVMDLAGSDEEAKPRYFVNPVLSDPSDTLKPYEEGCLSVPTVYDEIERPDRIHIQYLDYDGNECEEIAEGMFAVCIQHEMDHLEGVLFIDYLSRLKRQRAVQKVKKVEKSKDRDAA.

Fe cation contacts are provided by cysteine 94 and histidine 136. Glutamate 137 is a catalytic residue. Residue histidine 140 coordinates Fe cation.

The protein belongs to the polypeptide deformylase family. Requires Fe(2+) as cofactor.

The catalysed reaction is N-terminal N-formyl-L-methionyl-[peptide] + H2O = N-terminal L-methionyl-[peptide] + formate. Its function is as follows. Removes the formyl group from the N-terminal Met of newly synthesized proteins. Requires at least a dipeptide for an efficient rate of reaction. N-terminal L-methionine is a prerequisite for activity but the enzyme has broad specificity at other positions. This is Peptide deformylase from Maricaulis maris (strain MCS10) (Caulobacter maris).